The sequence spans 466 residues: ATP synthase subunit beta (466 aa).

An ATP-binding site is contributed by 155 to 162 (GGAGVGKT).

It belongs to the ATPase alpha/beta chains family. F-type ATPases have 2 components, CF(1) - the catalytic core - and CF(0) - the membrane proton channel. CF(1) has five subunits: alpha(3), beta(3), gamma(1), delta(1), epsilon(1). CF(0) has three main subunits: a(1), b(2) and c(9-12). The alpha and beta chains form an alternating ring which encloses part of the gamma chain. CF(1) is attached to CF(0) by a central stalk formed by the gamma and epsilon chains, while a peripheral stalk is formed by the delta and b chains.

It localises to the cell inner membrane. It catalyses the reaction ATP + H2O + 4 H(+)(in) = ADP + phosphate + 5 H(+)(out). In terms of biological role, produces ATP from ADP in the presence of a proton gradient across the membrane. The catalytic sites are hosted primarily by the beta subunits. In Azoarcus sp. (strain BH72), this protein is ATP synthase subunit beta.